Here is a 285-residue protein sequence, read N- to C-terminus: Protease HtpX homolog (285 aa).

A run of 2 helical transmembrane segments spans residues 7-27 and 30-50; these read TAMLMAGITALFIVIGGMIGG and GMTIALLFALAMNFFSYWFSD. Residue H131 coordinates Zn(2+). E132 is an active-site residue. H135 contacts Zn(2+). A run of 2 helical transmembrane segments spans residues 146-166 and 177-197; these read ITATMAGAISALANFAMFFGG and IAGIAVALLAPIAGALIQMAI. E202 lines the Zn(2+) pocket.

This sequence belongs to the peptidase M48B family. The cofactor is Zn(2+).

It is found in the cell inner membrane. The chain is Protease HtpX homolog from Burkholderia ambifaria (strain MC40-6).